A 307-amino-acid chain; its full sequence is Dihydroorotate dehydrogenase A (fumarate) (307 aa).

Residues serine 21 and 46 to 47 (KT) each bind FMN. Residues lysine 46, 70–74 (NSVGL), and asparagine 130 contribute to the substrate site. Asparagine 130 provides a ligand contact to FMN. Cysteine 133 (nucleophile) is an active-site residue. Lysine 168 and isoleucine 194 together coordinate FMN. Residue 195-196 (NT) participates in substrate binding. FMN is bound by residues glycine 220, 246 to 247 (GG), and 268 to 269 (GS).

Belongs to the dihydroorotate dehydrogenase family. Type 1 subfamily. As to quaternary structure, homodimer. FMN is required as a cofactor.

The protein localises to the cytoplasm. It carries out the reaction (S)-dihydroorotate + fumarate = orotate + succinate. It participates in pyrimidine metabolism; UMP biosynthesis via de novo pathway. Functionally, catalyzes the conversion of dihydroorotate to orotate with fumarate as the electron acceptor. In Lactobacillus delbrueckii subsp. bulgaricus (strain ATCC BAA-365 / Lb-18), this protein is Dihydroorotate dehydrogenase A (fumarate) (pyrD).